The following is a 145-amino-acid chain: Ribosome-binding factor A (145 aa).

A compositionally biased stretch (basic residues) spans 1–10 (MKRPSSHGRR). Disordered stretches follow at residues 1-21 (MKRPSSHGRRPPQGPSQRQLR) and 124-145 (DDPKVRQDLTPQPPSDSWKDED).

The protein belongs to the RbfA family. Monomer. Binds 30S ribosomal subunits, but not 50S ribosomal subunits or 70S ribosomes.

It is found in the cytoplasm. One of several proteins that assist in the late maturation steps of the functional core of the 30S ribosomal subunit. Associates with free 30S ribosomal subunits (but not with 30S subunits that are part of 70S ribosomes or polysomes). Required for efficient processing of 16S rRNA. May interact with the 5'-terminal helix region of 16S rRNA. The polypeptide is Ribosome-binding factor A (Phenylobacterium zucineum (strain HLK1)).